Reading from the N-terminus, the 260-residue chain is Snake venom serine protease 2B (260 aa).

The first 18 residues, 1 to 18 (MVLIRVLANLLILQLSYA), serve as a signal peptide directing secretion. A propeptide spanning residues 19–24 (QKSSEL) is cleaved from the precursor. A Peptidase S1 domain is found at 25–251 (VVGGDECNIN…HLDWIQSIIA (227 aa)). Intrachain disulfides connect cysteine 31–cysteine 165, cysteine 52–cysteine 68, cysteine 102–cysteine 258, cysteine 144–cysteine 212, cysteine 176–cysteine 191, and cysteine 202–cysteine 227. Catalysis depends on histidine 67, which acts as the Charge relay system. N-linked (GlcNAc...) asparagine glycans are attached at residues asparagine 101 and asparagine 105. Catalysis depends on aspartate 112, which acts as the Charge relay system. Asparagine 123 and asparagine 156 each carry an N-linked (GlcNAc...) asparagine glycan. The active-site Charge relay system is serine 206.

This sequence belongs to the peptidase S1 family. Snake venom subfamily. In terms of assembly, monomer. In terms of tissue distribution, expressed by the venom gland.

The protein resides in the secreted. Functionally, snake venom serine protease that may act in the hemostasis system of the prey. The sequence is that of Snake venom serine protease 2B (TLG2B) from Craspedocephalus gramineus (Bamboo pit viper).